Here is a 1017-residue protein sequence, read N- to C-terminus: Semaphorin-6D (1017 aa).

An N-terminal signal peptide occupies residues methionine 1–alanine 20. The Extracellular portion of the chain corresponds to valine 21–asparagine 606. The 486-residue stretch at aspartate 27 to leucine 512 folds into the Sema domain. An N-linked (GlcNAc...) asparagine glycan is attached at asparagine 51. Disulfide bonds link cysteine 108–cysteine 118, cysteine 136–cysteine 145, cysteine 259–cysteine 370, and cysteine 284–cysteine 329. Asparagine 283 carries N-linked (GlcNAc...) asparagine glycosylation. 2 N-linked (GlcNAc...) asparagine glycosylation sites follow: asparagine 435 and asparagine 461. 4 disulfide bridges follow: cysteine 477–cysteine 506, cysteine 515–cysteine 533, cysteine 521–cysteine 568, and cysteine 525–cysteine 541. Positions arginine 514–histidine 569 constitute a PSI domain. The chain crosses the membrane as a helical span at residues valine 607 to valine 627. At tyrosine 628–tyrosine 1017 the chain is on the cytoplasmic side. Phosphoserine occurs at positions 667, 678, and 688. 4 disordered regions span residues serine 688–glutamate 719, alanine 731–proline 769, threonine 783–aspartate 818, and leucine 873–serine 912. The residue at position 717 (threonine 717) is a Phosphothreonine. Basic and acidic residues predominate over residues serine 734 to threonine 749. Residues serine 875, serine 901, and serine 927 each carry the phosphoserine modification. Polar residues predominate over residues serine 875–threonine 886. Over residues leucine 965 to leucine 981 the composition is skewed to polar residues. The interval leucine 965–tyrosine 1017 is disordered.

The protein belongs to the semaphorin family.

It is found in the cell membrane. Its function is as follows. Shows growth cone collapsing activity on dorsal root ganglion (DRG) neurons in vitro. May be a stop signal for the DRG neurons in their target areas, and possibly also for other neurons. May also be involved in the maintenance and remodeling of neuronal connections. Ligand of TREM2 with PLXNA1 as coreceptor in dendritic cells, plays a role in the generation of immune responses and skeletal homeostasis. This chain is Semaphorin-6D (SEMA6D), found in Pongo abelii (Sumatran orangutan).